A 256-amino-acid polypeptide reads, in one-letter code: DNA repair protein RecO (256 aa).

The protein belongs to the RecO family.

In terms of biological role, involved in DNA repair and RecF pathway recombination. The sequence is that of DNA repair protein RecO from Delftia acidovorans (strain DSM 14801 / SPH-1).